A 647-amino-acid chain; its full sequence is Probable inactive receptor kinase RLK902 (647 aa).

A signal peptide spans Met1 to Gly29. 5 LRR repeats span residues Gly69–Asn93, Leu94–Cys118, Ser119–Leu142, Asn144–Asn165, and Leu166–Gln192. A helical transmembrane segment spans residues Gly268–Phe288. The 275-residue stretch at Arg365 to Arg639 folds into the Protein kinase domain. The residue at position 367 (Ser367) is a Phosphoserine. Leu371–Ala379 serves as a coordination point for ATP. Thr388 bears the Phosphothreonine mark. Lys393 contributes to the ATP binding site. A Phosphoserine modification is found at Ser444. At Thr520 the chain carries Phosphothreonine. Ser540 is modified (phosphoserine). Thr618 is modified (phosphothreonine).

Belongs to the protein kinase superfamily. Ser/Thr protein kinase family. In terms of assembly, interacts with At3g17950, At3g27210 and At5g05190. Autophosphorylation. In terms of tissue distribution, expressed in root tips, lateral root primordia, stipules, and floral organ abscission zones.

It localises to the cell membrane. This Arabidopsis thaliana (Mouse-ear cress) protein is Probable inactive receptor kinase RLK902 (RLK902).